The primary structure comprises 793 residues: DNA mismatch repair protein MutS (793 aa).

589–596 is an ATP binding site; sequence GPNMSGKS.

The protein belongs to the DNA mismatch repair MutS family.

In terms of biological role, this protein is involved in the repair of mismatches in DNA. It is possible that it carries out the mismatch recognition step. This protein has a weak ATPase activity. This is DNA mismatch repair protein MutS from Thermotoga sp. (strain RQ2).